Here is a 240-residue protein sequence, read N- to C-terminus: Orotidine 5'-phosphate decarboxylase (240 aa).

Residues Asp10, Lys32, 59–68 (DLKLHDIPNT), Thr122, Arg183, Gln192, Gly212, and Arg213 contribute to the substrate site. The active-site Proton donor is Lys61.

This sequence belongs to the OMP decarboxylase family. Type 1 subfamily. In terms of assembly, homodimer.

The catalysed reaction is orotidine 5'-phosphate + H(+) = UMP + CO2. Its pathway is pyrimidine metabolism; UMP biosynthesis via de novo pathway; UMP from orotate: step 2/2. In terms of biological role, catalyzes the decarboxylation of orotidine 5'-monophosphate (OMP) to uridine 5'-monophosphate (UMP). This chain is Orotidine 5'-phosphate decarboxylase, found in Carboxydothermus hydrogenoformans (strain ATCC BAA-161 / DSM 6008 / Z-2901).